The sequence spans 99 residues: Co-chaperonin GroES (99 aa).

This sequence belongs to the GroES chaperonin family. As to quaternary structure, heptamer of 7 subunits arranged in a ring. Interacts with the chaperonin GroEL.

The protein localises to the cytoplasm. In terms of biological role, together with the chaperonin GroEL, plays an essential role in assisting protein folding. The GroEL-GroES system forms a nano-cage that allows encapsulation of the non-native substrate proteins and provides a physical environment optimized to promote and accelerate protein folding. GroES binds to the apical surface of the GroEL ring, thereby capping the opening of the GroEL channel. This Corynebacterium efficiens (strain DSM 44549 / YS-314 / AJ 12310 / JCM 11189 / NBRC 100395) protein is Co-chaperonin GroES.